The following is a 58-amino-acid chain: Sperm histone P2b (58 aa).

Residues 20 to 41 are disordered; the sequence is LRRRRYRSSRRRRRRPCRRRRH.

The protein belongs to the protamine P2 family. As to expression, testis.

The protein resides in the nucleus. It localises to the chromosome. Its function is as follows. Protamines substitute for histones in the chromatin of sperm during the haploid phase of spermatogenesis. They compact sperm DNA into a highly condensed, stable and inactive complex. This is Sperm histone P2b from Equus caballus (Horse).